We begin with the raw amino-acid sequence, 384 residues long: Protein V (384 aa).

Disordered regions lie at residues 1 to 23 (MDQD…GGRE) and 38 to 318 (SEPT…KKGH). Positions 7 to 20 (ILKEDSEVEREAPG) are enriched in basic and acidic residues. The span at 50–59 (LHNTINTPQG) shows a compositional bias: polar residues. A Phosphoserine; by host modification is found at Ser68. Over residues 83-101 (RSGEESRVSGRTSKPEAEA) the composition is skewed to basic and acidic residues. Ser125 is modified (phosphoserine; by host). The span at 150–168 (GIEDENREMAAHPDKRGED) shows a compositional bias: basic and acidic residues. Residues 191–206 (ASNNGRSMEPGSSHSA) show a composition bias toward polar residues. Phosphoserine; by host is present on residues Ser192, Ser249, Ser257, and Ser260. Residues His318, Cys337, Cys341, Cys353, Cys355, Cys358, Cys362, and Cys365 each coordinate Zn(2+).

Belongs to the paramyxoviruses V protein family. In terms of assembly, interacts with host IFIH1/MDA5 and DHX58/LGP2. Interacts with host IRF3. Interacts with host RIGI regulatory protein (via CARDs domain) and host TRIM25 (via SPRY domain); these interactions prevent TRIM25-mediated ubiquitination of RIG-I and disrupts downstream RIG-I signaling.

The protein resides in the host cytoplasm. Functionally, plays an essential role in the inhibition of host immune response. Prevents the establishment of cellular antiviral state by blocking interferon-alpha/beta (IFN-alpha/beta) production and signaling pathway. Interacts with host IFIH1/MDA5 and DHX58/LGP2 to inhibit the transduction pathway involved in the activation of IFN-beta promoter, thus protecting the virus against cell antiviral state. Also interacts with and inhibits host IRF3. Blocks the type I interferon signaling pathway by disrupting the RIG-I signaling pathway. The polypeptide is Protein V (P/V/C) (Sendai virus (strain Harris) (SeV)).